A 527-amino-acid polypeptide reads, in one-letter code: Glucose-6-phosphate isomerase (527 aa).

Glu-323 acts as the Proton donor in catalysis. Active-site residues include His-352 and Lys-454.

It belongs to the GPI family.

It is found in the cytoplasm. The enzyme catalyses alpha-D-glucose 6-phosphate = beta-D-fructose 6-phosphate. The protein operates within carbohydrate biosynthesis; gluconeogenesis. Its pathway is carbohydrate degradation; glycolysis; D-glyceraldehyde 3-phosphate and glycerone phosphate from D-glucose: step 2/4. Its function is as follows. Catalyzes the reversible isomerization of glucose-6-phosphate to fructose-6-phosphate. In Prochlorococcus marinus (strain MIT 9515), this protein is Glucose-6-phosphate isomerase.